The following is a 337-amino-acid chain: tRNA(Ile)-lysidine synthase (337 aa).

Residue 40-45 (SGGQDS) coordinates ATP.

It belongs to the tRNA(Ile)-lysidine synthase family.

It is found in the cytoplasm. The catalysed reaction is cytidine(34) in tRNA(Ile2) + L-lysine + ATP = lysidine(34) in tRNA(Ile2) + AMP + diphosphate + H(+). Its function is as follows. Ligates lysine onto the cytidine present at position 34 of the AUA codon-specific tRNA(Ile) that contains the anticodon CAU, in an ATP-dependent manner. Cytidine is converted to lysidine, thus changing the amino acid specificity of the tRNA from methionine to isoleucine. This Parasynechococcus marenigrum (strain WH8102) protein is tRNA(Ile)-lysidine synthase.